The following is a 242-amino-acid chain: MAGHSKWANIKHRKGAQDALKAKIFNKFSKEIMVAVAKGGSDPNSNPALRLIISKARAKSMPKSNIEKAIAKGEGSTSNGENFKEIIYSGTLSHGISVIVVILTDNINRAIASLQALFRRANGQIGKQNSIPYLFEQKGYLEIEKNNLDEDDLMLFSLDNGAEDFQSDEENYMIYCQPRKISELKNEIEKKFSPNFRAVEISYFPNEWVELDQENTEKILNQIDNFLDDEDIQNVYHNLKFA.

It belongs to the TACO1 family.

The protein resides in the cytoplasm. The chain is Probable transcriptional regulatory protein mhp472 from Mesomycoplasma hyopneumoniae (strain 232) (Mycoplasma hyopneumoniae).